We begin with the raw amino-acid sequence, 479 residues long: Proline--tRNA ligase (479 aa).

The protein belongs to the class-II aminoacyl-tRNA synthetase family. ProS type 3 subfamily. Homodimer.

The protein resides in the cytoplasm. The catalysed reaction is tRNA(Pro) + L-proline + ATP = L-prolyl-tRNA(Pro) + AMP + diphosphate. In terms of biological role, catalyzes the attachment of proline to tRNA(Pro) in a two-step reaction: proline is first activated by ATP to form Pro-AMP and then transferred to the acceptor end of tRNA(Pro). The protein is Proline--tRNA ligase of Mesomycoplasma hyopneumoniae (strain 7448) (Mycoplasma hyopneumoniae).